A 143-amino-acid chain; its full sequence is Endoribonuclease YbeY (143 aa).

3 residues coordinate Zn(2+): H109, H113, and H119.

The protein belongs to the endoribonuclease YbeY family. Zn(2+) is required as a cofactor.

The protein localises to the cytoplasm. Its function is as follows. Single strand-specific metallo-endoribonuclease involved in late-stage 70S ribosome quality control and in maturation of the 3' terminus of the 16S rRNA. This is Endoribonuclease YbeY from Leptospira borgpetersenii serovar Hardjo-bovis (strain JB197).